The chain runs to 128 residues: Holo-[acyl-carrier-protein] synthase (128 aa).

The Mg(2+) site is built by D8 and E59.

It belongs to the P-Pant transferase superfamily. AcpS family. Mg(2+) serves as cofactor.

It is found in the cytoplasm. The enzyme catalyses apo-[ACP] + CoA = holo-[ACP] + adenosine 3',5'-bisphosphate + H(+). Its function is as follows. Transfers the 4'-phosphopantetheine moiety from coenzyme A to a Ser of acyl-carrier-protein. This Rickettsia typhi (strain ATCC VR-144 / Wilmington) protein is Holo-[acyl-carrier-protein] synthase.